The following is a 591-amino-acid chain: Nuclear receptor subfamily 4 group A member 2 (591 aa).

2 disordered regions span residues 1 to 22 and 110 to 133; these read MPCV…SQSY and SEEM…SSTP. Residues 8–22 show a composition bias toward low complexity; the sequence is YGSSPQGASPASQSY. The nuclear receptor DNA-binding region spans 253–328; the sequence is EGLCAVCGDN…VGMVKEVVRT (76 aa). 2 NR C4-type zinc fingers span residues 256–276 and 292–311; these read CAVC…CEGC and CLAN…CQYC. Residues 280–307 carry the Bipartite nuclear localization signal (NLS1) motif; that stretch reads FKRTVQKNAKYVCLANKNCPVDKRRRNR. Residues 330–354 are disordered; that stretch reads SLKGRRGRLPSKPKSPQEPSPPSPP. Positions 331-343 match the Nuclear localization signal (NLS1) motif; the sequence is LKGRRGRLPSKPK. Positions 345–354 are enriched in pro residues; it reads PQEPSPPSPP. One can recognise an NR LBD domain in the interval 353 to 588; sequence PPVSLISALV…AIIDKLFLDT (236 aa). Positions 436–445 match the nuclear export sequence (NES1) motif; that stretch reads FLELFVLRLA. The short motif at 561 to 570 is the nuclear export sequence (NES2) element; that stretch reads QGLQRIFYLK.

It belongs to the nuclear hormone receptor family.

The protein resides in the cytoplasm. It localises to the nucleus. Functionally, transcriptional regulator which may play a role in the differentiation and maintenance of meso-diencephalic dopaminergic (mdDA) neurons. The protein is Nuclear receptor subfamily 4 group A member 2 (nr4a2) of Xenopus tropicalis (Western clawed frog).